The following is a 328-amino-acid chain: DNA-directed RNA polymerase subunit alpha (328 aa).

Residues 1–232 (MSTQGFLKPR…DQISVFAALE (232 aa)) are alpha N-terminal domain (alpha-NTD). Positions 248–328 (IDPVLLRPVD…NWPPLGLERP (81 aa)) are alpha C-terminal domain (alpha-CTD).

Belongs to the RNA polymerase alpha chain family. In terms of assembly, homodimer. The RNAP catalytic core consists of 2 alpha, 1 beta, 1 beta' and 1 omega subunit. When a sigma factor is associated with the core the holoenzyme is formed, which can initiate transcription.

It catalyses the reaction RNA(n) + a ribonucleoside 5'-triphosphate = RNA(n+1) + diphosphate. DNA-dependent RNA polymerase catalyzes the transcription of DNA into RNA using the four ribonucleoside triphosphates as substrates. This chain is DNA-directed RNA polymerase subunit alpha, found in Bordetella bronchiseptica (strain ATCC BAA-588 / NCTC 13252 / RB50) (Alcaligenes bronchisepticus).